The following is a 222-amino-acid chain: Peptide methionine sulfoxide reductase MsrA (222 aa).

Cys54 is a catalytic residue.

The protein belongs to the MsrA Met sulfoxide reductase family.

It carries out the reaction L-methionyl-[protein] + [thioredoxin]-disulfide + H2O = L-methionyl-(S)-S-oxide-[protein] + [thioredoxin]-dithiol. It catalyses the reaction [thioredoxin]-disulfide + L-methionine + H2O = L-methionine (S)-S-oxide + [thioredoxin]-dithiol. Functionally, has an important function as a repair enzyme for proteins that have been inactivated by oxidation. Catalyzes the reversible oxidation-reduction of methionine sulfoxide in proteins to methionine. This is Peptide methionine sulfoxide reductase MsrA from Methylococcus capsulatus (strain ATCC 33009 / NCIMB 11132 / Bath).